The following is a 202-amino-acid chain: Dephospho-CoA kinase (202 aa).

Residues 4-202 (FLGLTGGIAT…EGVCHKSGMS (199 aa)) form the DPCK domain. 12-17 (ATGKTT) contacts ATP.

This sequence belongs to the CoaE family.

It is found in the cytoplasm. The enzyme catalyses 3'-dephospho-CoA + ATP = ADP + CoA + H(+). Its pathway is cofactor biosynthesis; coenzyme A biosynthesis; CoA from (R)-pantothenate: step 5/5. In terms of biological role, catalyzes the phosphorylation of the 3'-hydroxyl group of dephosphocoenzyme A to form coenzyme A. The chain is Dephospho-CoA kinase from Latilactobacillus sakei subsp. sakei (strain 23K) (Lactobacillus sakei subsp. sakei).